The primary structure comprises 126 residues: Large ribosomal subunit protein uL22 (126 aa).

Belongs to the universal ribosomal protein uL22 family. In terms of assembly, part of the 50S ribosomal subunit.

Its function is as follows. This protein binds specifically to 23S rRNA; its binding is stimulated by other ribosomal proteins, e.g. L4, L17, and L20. It is important during the early stages of 50S assembly. It makes multiple contacts with different domains of the 23S rRNA in the assembled 50S subunit and ribosome. In terms of biological role, the globular domain of the protein is located near the polypeptide exit tunnel on the outside of the subunit, while an extended beta-hairpin is found that lines the wall of the exit tunnel in the center of the 70S ribosome. The chain is Large ribosomal subunit protein uL22 from Phenylobacterium zucineum (strain HLK1).